A 392-amino-acid polypeptide reads, in one-letter code: Alaserpin (392 aa).

Residues 1–16 (MKIIMCIFGLAALAMA) form the signal peptide. A glycan (N-linked (GlcNAc...) asparagine) is linked at N85.

This sequence belongs to the serpin family. As to expression, hemolymph.

Its subcellular location is the secreted. The protein resides in the extracellular space. Inhibits elastase. In Manduca sexta (Tobacco hawkmoth), this protein is Alaserpin.